The chain runs to 252 residues: Orotidine 5'-phosphate decarboxylase (252 aa).

Substrate-binding positions include D26, K48, 75-84 (DLKFHDIPNT), T135, R196, Q205, G225, and R226. The Proton donor role is filled by K77.

This sequence belongs to the OMP decarboxylase family. Type 1 subfamily. In terms of assembly, homodimer.

The catalysed reaction is orotidine 5'-phosphate + H(+) = UMP + CO2. Its pathway is pyrimidine metabolism; UMP biosynthesis via de novo pathway; UMP from orotate: step 2/2. Catalyzes the decarboxylation of orotidine 5'-monophosphate (OMP) to uridine 5'-monophosphate (UMP). The chain is Orotidine 5'-phosphate decarboxylase from Sodalis glossinidius (strain morsitans).